A 342-amino-acid polypeptide reads, in one-letter code: Succinylglutamate desuccinylase (342 aa).

Positions 63, 66, and 155 each coordinate Zn(2+). Glutamate 219 is a catalytic residue.

Belongs to the AspA/AstE family. Succinylglutamate desuccinylase subfamily. Zn(2+) serves as cofactor.

The enzyme catalyses N-succinyl-L-glutamate + H2O = L-glutamate + succinate. The protein operates within amino-acid degradation; L-arginine degradation via AST pathway; L-glutamate and succinate from L-arginine: step 5/5. In terms of biological role, transforms N(2)-succinylglutamate into succinate and glutamate. The chain is Succinylglutamate desuccinylase from Vibrio vulnificus (strain YJ016).